Consider the following 236-residue polypeptide: tRNA1(Val) (adenine(37)-N6)-methyltransferase (236 aa).

This sequence belongs to the methyltransferase superfamily. tRNA (adenine-N(6)-)-methyltransferase family.

The protein resides in the cytoplasm. It carries out the reaction adenosine(37) in tRNA1(Val) + S-adenosyl-L-methionine = N(6)-methyladenosine(37) in tRNA1(Val) + S-adenosyl-L-homocysteine + H(+). Its function is as follows. Specifically methylates the adenine in position 37 of tRNA(1)(Val) (anticodon cmo5UAC). This is tRNA1(Val) (adenine(37)-N6)-methyltransferase from Aeromonas salmonicida (strain A449).